A 1057-amino-acid chain; its full sequence is Carbamoyl phosphate synthase large chain (1057 aa).

Positions 1–401 (MPKRNDIKTI…SLLKAIRSLE (401 aa)) are carboxyphosphate synthetic domain. Arginine 129, arginine 169, glycine 175, glycine 176, lysine 208, isoleucine 210, glutamate 215, glycine 241, isoleucine 242, histidine 243, glutamine 284, and glutamate 298 together coordinate ATP. An ATP-grasp 1 domain is found at 133 to 327 (RTLMNDLNVP…IAKLAAKIAV (195 aa)). Mg(2+) is bound by residues glutamine 284, glutamate 298, and asparagine 300. Glutamine 284, glutamate 298, and asparagine 300 together coordinate Mn(2+). Residues 402 to 546 (YGVHHLGLPN…YGTYETENES (145 aa)) are oligomerization domain. Residues 547–929 (IVTDKEKILV…ALFKGLTGSG (383 aa)) are carbamoyl phosphate synthetic domain. Positions 671-861 (EALLRKINVP…MAQLAMRAII (191 aa)) constitute an ATP-grasp 2 domain. ATP contacts are provided by arginine 707, arginine 746, leucine 748, glutamate 752, glycine 777, valine 778, histidine 779, serine 780, glutamine 820, and glutamate 832. Residues glutamine 820, glutamate 832, and asparagine 834 each coordinate Mg(2+). 3 residues coordinate Mn(2+): glutamine 820, glutamate 832, and asparagine 834. The MGS-like domain occupies 930–1057 (VEVKDHGTVL…ESMTFTMRQM (128 aa)). An allosteric domain region spans residues 930 to 1057 (VEVKDHGTVL…ESMTFTMRQM (128 aa)).

It belongs to the CarB family. As to quaternary structure, composed of two chains; the small (or glutamine) chain promotes the hydrolysis of glutamine to ammonia, which is used by the large (or ammonia) chain to synthesize carbamoyl phosphate. Tetramer of heterodimers (alpha,beta)4. The cofactor is Mg(2+). Mn(2+) is required as a cofactor.

It catalyses the reaction hydrogencarbonate + L-glutamine + 2 ATP + H2O = carbamoyl phosphate + L-glutamate + 2 ADP + phosphate + 2 H(+). It carries out the reaction hydrogencarbonate + NH4(+) + 2 ATP = carbamoyl phosphate + 2 ADP + phosphate + 2 H(+). It participates in amino-acid biosynthesis; L-arginine biosynthesis; carbamoyl phosphate from bicarbonate: step 1/1. It functions in the pathway pyrimidine metabolism; UMP biosynthesis via de novo pathway; (S)-dihydroorotate from bicarbonate: step 1/3. Its function is as follows. Large subunit of the glutamine-dependent carbamoyl phosphate synthetase (CPSase). CPSase catalyzes the formation of carbamoyl phosphate from the ammonia moiety of glutamine, carbonate, and phosphate donated by ATP, constituting the first step of 2 biosynthetic pathways, one leading to arginine and/or urea and the other to pyrimidine nucleotides. The large subunit (synthetase) binds the substrates ammonia (free or transferred from glutamine from the small subunit), hydrogencarbonate and ATP and carries out an ATP-coupled ligase reaction, activating hydrogencarbonate by forming carboxy phosphate which reacts with ammonia to form carbamoyl phosphate. In Staphylococcus aureus (strain MW2), this protein is Carbamoyl phosphate synthase large chain.